A 387-amino-acid polypeptide reads, in one-letter code: 3-ketoacyl-CoA thiolase (387 aa).

The Acyl-thioester intermediate role is filled by Cys-91. Residues His-343 and Cys-373 each act as proton acceptor in the active site.

It belongs to the thiolase-like superfamily. Thiolase family. In terms of assembly, heterotetramer of two alpha chains (FadB) and two beta chains (FadA).

The protein localises to the cytoplasm. It carries out the reaction an acyl-CoA + acetyl-CoA = a 3-oxoacyl-CoA + CoA. It participates in lipid metabolism; fatty acid beta-oxidation. Catalyzes the final step of fatty acid oxidation in which acetyl-CoA is released and the CoA ester of a fatty acid two carbons shorter is formed. This chain is 3-ketoacyl-CoA thiolase, found in Photobacterium profundum (strain SS9).